The following is a 124-amino-acid chain: MATINQLVNNPRKRSVVKSKVPALKACPQRRGVCTRVYTTTPKKPNSALRKVARVRLTSRFEVTSYIGGEGHNLQEHSVVLIRGGRVKDLPGVRYHIVRGALDTSGVNNRKHGRSKYGTKRPKS.

Asp-89 carries the post-translational modification 3-methylthioaspartic acid. Residues 102–124 (LDTSGVNNRKHGRSKYGTKRPKS) form a disordered region. Positions 109 to 124 (NRKHGRSKYGTKRPKS) are enriched in basic residues.

This sequence belongs to the universal ribosomal protein uS12 family. Part of the 30S ribosomal subunit. Contacts proteins S8 and S17. May interact with IF1 in the 30S initiation complex.

In terms of biological role, with S4 and S5 plays an important role in translational accuracy. Functionally, interacts with and stabilizes bases of the 16S rRNA that are involved in tRNA selection in the A site and with the mRNA backbone. Located at the interface of the 30S and 50S subunits, it traverses the body of the 30S subunit contacting proteins on the other side and probably holding the rRNA structure together. The combined cluster of proteins S8, S12 and S17 appears to hold together the shoulder and platform of the 30S subunit. The sequence is that of Small ribosomal subunit protein uS12 from Francisella tularensis subsp. tularensis (strain FSC 198).